An 857-amino-acid chain; its full sequence is ATP-dependent RNA helicase DDX24 (857 aa).

The interval 61-179 (NPSRLFSSEE…SPKLPKKSKK (119 aa)) is disordered. 2 positions are modified to phosphoserine: Ser-80 and Ser-92. A compositionally biased stretch (basic residues) spans 152-161 (PRKKKNKGKK). Ser-170 is modified (phosphoserine). Positions 193–221 (SAWRDLFVPKAVLRALSFLGFSAPTPIQA) match the Q motif motif. In terms of domain architecture, Helicase ATP-binding spans 225 to 528 (APAIRDKLDI…RILHKKHVKK (304 aa)). ATP is bound at residue 238 to 245 (AETGSGKT). The disordered stretch occupies residues 279–363 (RFGATAHLGS…NEDGEEKFDA (85 aa)). 2 positions are modified to phosphoserine: Ser-288 and Ser-296. Residues 290-307 (CKDRTESGVLPEEARIET) show a composition bias toward basic and acidic residues. Over residues 309-330 (AQPSDSGVQATPETSASASAQT) the composition is skewed to polar residues. A compositionally biased stretch (basic and acidic residues) spans 345–363 (LEEKPVPKQNEDGEEKFDA). Lys-370 participates in a covalent cross-link: Glycyl lysine isopeptide (Lys-Gly) (interchain with G-Cter in SUMO2). A DEAD box motif is present at residues 471–474 (DEAD). The region spanning 576-723 (DLYLYYFLMQ…LFPVQSKYMD (148 aa)) is the Helicase C-terminal domain. Lys-624 participates in a covalent cross-link: Glycyl lysine isopeptide (Lys-Gly) (interchain with G-Cter in SUMO2). The disordered stretch occupies residues 808–857 (RYPTQSGRPPQPVLASRNIESALSCLSRQKRRRKKPKEPRAPPQPGSSTS). Residues 825–834 (NIESALSCLS) show a composition bias toward polar residues. A compositionally biased stretch (basic residues) spans 835-844 (RQKRRRKKPK). The span at 848–857 (APPQPGSSTS) shows a compositional bias: pro residues.

This sequence belongs to the DEAD box helicase family. DDX24/MAK5 subfamily. Interacts with FADD. Interacts with RIPK1; this interaction disrupts RLR signaling activation of IFN-dependent transcription factor IRF7. Interacts with NIP7. Interacts with EP300; this interaction prevents TP53 acetylation mediated by EP300. In terms of processing, ubiquitinated by MDM2 without targeting DDX24 for proteasomal degradation. Instead, polyubiquitylated DDX24 promotes interaction with NIP7, a component of pre-rRNP processing complex, and associates with pre-rRNA molecules and pre-ribosomal particles.

The protein localises to the cytoplasm. Its subcellular location is the nucleus. The catalysed reaction is ATP + H2O = ADP + phosphate + H(+). ATP-dependent RNA helicase that plays a role in various aspects of RNA metabolism including pre-mRNA splicing and is thereby involved in different biological processes such as cell cycle regulation or innate immunity. Plays an inhibitory role in TP53 transcriptional activity and subsequently in TP53 controlled cell growth arrest and senescence by inhibiting its EP300 mediated acetylation. Negatively regulates cytosolic RNA-mediated innate immune signaling at least in part by affecting RIPK1/IRF7 interactions. Alternatively, possesses antiviral activity by recognizing gammaherpesvirus transcripts in the context of lytic reactivation. Plays an essential role in cell cycle regulation in vascular smooth muscle cells by interacting with and regulating FANCA (Fanconi anemia complementation group A) mRNA. This is ATP-dependent RNA helicase DDX24 (Ddx24) from Mus musculus (Mouse).